The chain runs to 608 residues: Isocitrate dehydrogenase kinase/phosphatase (608 aa).

ATP-binding positions include 327 to 333 (APGIKGL) and lysine 348. The active site involves aspartate 383. The disordered stretch occupies residues 589–608 (FDSTPDAGDGDSAGDAQRAA).

This sequence belongs to the AceK family.

It is found in the cytoplasm. It carries out the reaction L-seryl-[isocitrate dehydrogenase] + ATP = O-phospho-L-seryl-[isocitrate dehydrogenase] + ADP + H(+). Bifunctional enzyme which can phosphorylate or dephosphorylate isocitrate dehydrogenase (IDH) on a specific serine residue. This is a regulatory mechanism which enables bacteria to bypass the Krebs cycle via the glyoxylate shunt in response to the source of carbon. When bacteria are grown on glucose, IDH is fully active and unphosphorylated, but when grown on acetate or ethanol, the activity of IDH declines drastically concomitant with its phosphorylation. The polypeptide is Isocitrate dehydrogenase kinase/phosphatase (Burkholderia ambifaria (strain MC40-6)).